A 232-amino-acid chain; its full sequence is Very-long-chain (3R)-3-hydroxyacyl-CoA dehydratase 4 (232 aa).

At 1–19 (MGPSVLPAWLQPRYRKNVY) the chain is on the cytoplasmic side. A helical membrane pass occupies residues 20-40 (LFIYYLIQFCGHSWILANMTV). The Lumenal portion of the chain corresponds to 41 to 56 (RFFSFGKDSMADTFYA). Residues 57-77 (IGLVMRVCQSISLLELLHIYI) traverse the membrane as a helical segment. The Cytoplasmic portion of the chain corresponds to 78 to 112 (GIESNQLFPRFLQLTERVIILFGVITSQEEVQEKC). Residues 113-133 (VVCVLFILWNLLDMVRYTYSM) traverse the membrane as a helical segment. At 134-135 (LS) the chain is on the lumenal side. A helical membrane pass occupies residues 136–156 (VIGTSYAALTWLSQTLWMPIY). Tyr-156 is an active-site residue. A topological domain (cytoplasmic) is located at residue Pro-157. The chain crosses the membrane as a helical span at residues 158–178 (LCVLAEAFTIYQSLPYFESFG). Residue Glu-163 is part of the active site. Topologically, residues 179–189 (TNSTVLPFDLS) are lumenal. Residues 190-210 (TCFPYVLKLYLMMLFIGMYFT) form a helical membrane-spanning segment. The Cytoplasmic segment spans residues 211–232 (YSHLYTERKDFLRVFSVKQKNV).

Belongs to the very long-chain fatty acids dehydratase HACD family. In terms of assembly, may interact with enzymes of the ELO family (including ELOVL1); with those enzymes that mediate condensation, the first of the four steps of the reaction cycle responsible for fatty acids elongation, may be part of a larger fatty acids elongase complex.

It localises to the endoplasmic reticulum membrane. The enzyme catalyses a very-long-chain (3R)-3-hydroxyacyl-CoA = a very-long-chain (2E)-enoyl-CoA + H2O. The catalysed reaction is (3R)-hydroxyhexadecanoyl-CoA = (2E)-hexadecenoyl-CoA + H2O. The protein operates within lipid metabolism; fatty acid biosynthesis. In terms of biological role, catalyzes the third of the four reactions of the long-chain fatty acids elongation cycle. This endoplasmic reticulum-bound enzymatic process, allows the addition of two carbons to the chain of long- and very long-chain fatty acids/VLCFAs per cycle. This enzyme catalyzes the dehydration of the 3-hydroxyacyl-CoA intermediate into trans-2,3-enoyl-CoA, within each cycle of fatty acid elongation. Thereby, it participates in the production of VLCFAs of different chain lengths that are involved in multiple biological processes as precursors of membrane lipids and lipid mediators. The protein is Very-long-chain (3R)-3-hydroxyacyl-CoA dehydratase 4 of Mus musculus (Mouse).